Consider the following 851-residue polypeptide: Glutathione transporter 1 (851 aa).

Residues 1-14 (MTARNSASIPTSIR) are compositionally biased toward polar residues. The segment at 1 to 116 (MTARNSASIP…LDNETDSEVE (116 aa)) is disordered. N-linked (GlcNAc...) asparagine glycosylation is present at N32. Residues 33-68 (LSTKTASKTSLTFRQSSSDESTSSYSGNHHNINIQH) show a composition bias toward low complexity. Residues 74–92 (FRTNSSSFSPNDYSISESP) show a composition bias toward polar residues. N77 is a glycosylation site (N-linked (GlcNAc...) asparagine). S93 is modified (phosphoserine). Residues 105 to 134 (VQLDNETDSEVESEVEELERELEAIEDSVY) are a coiled coil. The N-linked (GlcNAc...) asparagine glycan is linked to N109. The next 2 membrane-spanning stretches (helical) occupy residues 156–176 (TWVL…FFSL) and 179–199 (PALS…GKLL). N256 is a glycosylation site (N-linked (GlcNAc...) asparagine). The next 4 helical transmembrane spans lie at 259-279 (WGYK…FAGL), 282-302 (RWIV…TVLF), 333-353 (FFAY…FIFK), and 405-425 (WVIC…VPIL). 2 N-linked (GlcNAc...) asparagine glycosylation sites follow: N452 and N464. The next 5 helical transmembrane spans lie at 480 to 500 (YSMS…HCAL), 531 to 551 (APQW…IFTV), 560 to 580 (VWAL…QGVL), 592 to 612 (IITE…NLMI), and 642 to 662 (ILFF…VAVQ). N-linked (GlcNAc...) asparagine glycosylation is present at N691. The next 3 helical transmembrane spans lie at 711–731 (YYPL…TWGL), 757–777 (PATG…NYVI), and 791–811 (VLAA…FLCV). N-linked (GlcNAc...) asparagine glycosylation is present at N843.

The protein belongs to the oligopeptide OPT transporter family.

It is found in the endoplasmic reticulum membrane. Its subcellular location is the cell membrane. Functionally, high-affinity glutathione transporter which plays a role in scavenging glutathione from the extracellular environment for the maintenance of sulfur homeostasis. This is Glutathione transporter 1 (pgt1) from Schizosaccharomyces pombe (strain 972 / ATCC 24843) (Fission yeast).